A 5495-amino-acid polypeptide reads, in one-letter code: Microtubule-associated protein futsch (5495 aa).

Disordered regions lie at residues 1–97 (MGDQ…DADG), 656–975 (AKAD…LKEE), 988–1074 (RDEM…AEEE), 1086–1111 (ERKA…EQSK), 1128–1167 (KSRT…IGAP), 1185–1204 (SATI…DERI), 1255–1275 (KDAP…SGER), 1306–1358 (HEEA…EPNK), 1402–1840 (NQED…VVES), 1866–2631 (EIGK…PGFV), 2709–2810 (AKTV…KDFA), 2830–4166 (LPTL…DLSL), 4196–4230 (KAES…EASP), 4362–4612 (IIPD…ASQL), 4636–4668 (AQKS…DDSL), 4687–4975 (AFST…QMLA), 5035–5065 (KTVT…ERDQ), 5101–5138 (SYEL…EEHS), 5170–5199 (PSTE…QTWA), and 5328–5350 (GLPS…PKKE). Low complexity predominate over residues 35–48 (AKGAGDGPAQDAAQ). Composition is skewed to basic and acidic residues over residues 656–672 (AKAD…HEAD), 696–716 (EPEH…KKVE), and 758–795 (GKAD…EKKS). Composition is skewed to low complexity over residues 797 to 806 (PTTTPAARAP) and 819 to 831 (PATK…TPAK). Residues 832–843 (SAKEANNRKVLE) show a composition bias toward basic and acidic residues. Residues 850-888 (RVQATSTVSRRVTSTASERRVQQQAEAKTAATGATQATQ) show a composition bias toward low complexity. Basic and acidic residues predominate over residues 918 to 931 (KAADLKKTRLDKGG). Over residues 932–942 (TTDSSLVSTPS) the composition is skewed to polar residues. Composition is skewed to basic and acidic residues over residues 962–975 (DAEK…LKEE) and 988–1007 (RDEM…REMP). A compositionally biased stretch (acidic residues) spans 1012–1041 (GDGENEPDEEEEYLIIEKEEVEQYTEDSIV). Residues 1047 to 1065 (MTKEEEIQKHQRDSQESEK) are compositionally biased toward basic and acidic residues. Composition is skewed to basic and acidic residues over residues 1128-1140 (KSRT…KPAE) and 1148-1163 (PEEK…KDDQ). The segment covering 1187 to 1196 (TIESGATTAP) has biased composition (polar residues). 4 stretches are compositionally biased toward basic and acidic residues: residues 1306–1319 (HEEA…KDSQ), 1327–1337 (SHKEESAKEEK), 1343–1358 (KENK…EPNK), and 1408–1443 (EQVK…KETS). 2 repeat units span residues 1469 to 1502 (REDT…VPAP) and 1513 to 1539 (LASK…KSKK). The tract at residues 1469–4032 (REDTGSIESP…SPLASKESSR (2564 aa)) is 53 X approximate repeat. Composition is skewed to basic and acidic residues over residues 1546–1555 (PESEAKDKKS), 1571–1663 (SVKD…DEKS), 1679–1696 (SVKD…RESI), 1718–1732 (GIKD…RRDS), and 1748–1779 (SVKD…DEKS). Tandem repeats lie at residues 1622-1649 (KSAL…RESI), 1660-1686 (DEKS…ETEK), 1690-1718 (PSRR…VIDG), 1755-1782 (KSTE…SPLT), 1790-1818 (ESAV…RDVS), 1837-1865 (VVES…FVSL), 1874-1902 (SEVI…IVLP), 1911-1939 (PSRP…SVAE), 1948-1976 (KETS…ESVK), 1985-2013 (TSRP…STTQ), 2022-2050 (DEKS…EKSK), 2059-2087 (AEKS…EKSK), 2096-2124 (AEKS…EKSK), 2133-2161 (AEKS…EKSK), 2170-2198 (AEKS…EKSK), 2215-2243 (KEAS…RESV), and 2262-2292 (ESIK…KEAS). A compositionally biased stretch (polar residues) spans 1804–1815 (ERSQPESVTASR). 18 stretches are compositionally biased toward basic and acidic residues: residues 1887-1896 (VKPESRRESS), 1904-1942 (HAED…ESDK), 1960-1976 (MKDE…ESVK), 1994-2007 (SAKD…ELSR), 2041-2059 (SVKD…ESVA), 2078-2096 (SIKD…ESVA), 2115-2133 (SIKD…ESVA), 2152-2170 (SIKD…ESVA), 2189-2207 (SIKD…ESVA), 2226-2244 (SIKD…ESVA), 2263-2281 (SIKD…ESVA), 2300-2318 (SIKD…ESVA), 2337-2355 (SIKD…ESAA), 2374-2391 (SVKD…RESM), 2419-2435 (SVKD…RRES), 2466-2482 (SVKD…ESKT), 2560-2588 (IKYD…EDKS), and 2604-2627 (SDHE…DKSR). Copy 20 of the repeat occupies 2355–2391 (AEKSPLPSKEASRPASVAESVKDEADKSKEESRRESM). 2 tandem repeats follow at residues 2703 to 2726 (LAQI…PSAP) and 2761 to 2787 (WVAE…ASTE). The segment covering 2764 to 2780 (ESKDDAAQLKSSVEDLR) has biased composition (basic and acidic residues). Ser-2800 carries the phosphoserine; by GSK3-beta modification. 3 repeat units span residues 2820–2846 (LPLT…DFPQ), 2864–2892 (LSKV…AEER), and 2907–2933 (VEKS…GDIS). A compositionally biased stretch (low complexity) spans 2845–2861 (PQTSTPTSSPTVASVQP). Basic and acidic residues-rich tracts occupy residues 2889 to 2914 (AEER…KDAS) and 2942 to 2954 (GPKD…KESS). Positions 2955–2966 (RPPSVSASITGD) are enriched in polar residues. 28 tandem repeats follow at residues 2956–2987 (PPSV…EHDK), 3006–3034 (GKSD…SRRE), 3049–3075 (SRPE…KDTS), 3089–3117 (EKSE…SQEA), 3131–3158 (DEKQ…SPMD), 3200–3224 (KSDI…SVVG), 3228–3256 (DEKA…APPS), 3265–3293 (VLGS…EKSL), 3302–3330 (PESE…ESVK), 3339–3367 (KEAS…ESLP), 3376–3404 (DEKS…EQFP), 3413–3441 (PASV…ASRP), 3450–3478 (DEAE…ASRP), 3487–3515 (DEAD…ASRP), 3524–3552 (DEAE…ASRP), 3561–3589 (DEAE…ASRP), 3598–3626 (DEAE…ASRP), 3635–3663 (DEAE…ASRP), 3672–3700 (DEAE…ASRP), 3709–3737 (DEAE…ASRP), 3746–3774 (DDAE…ASRP), 3783–3811 (DEAE…ASRP), 3820–3848 (DEAE…ASRP), 3867–3894 (RRES…SVKD), 3895–3921 (EAEK…EASR), 3931–3958 (DEAD…EASR), 3968–3995 (DETE…EASR), and 4005–4032 (DEAE…ESSR). 7 stretches are compositionally biased toward basic and acidic residues: residues 2980–2996 (SVKD…ESIA), 3017–3051 (SQKD…ESRP), 3061–3075 (VPRE…KDTS), 3087–3116 (EDEK…KSQE), 3156–3168 (PMDK…EPSR), 3175–3208 (SIKH…KGEK), and 3226–3248 (IKDE…ESSK). Residues Ser-3067, Ser-3071, and Ser-3075 each carry the phosphoserine modification. Basic and acidic residues predominate over residues 3300-3310 (SRPESEAESLK). Polar residues predominate over residues 3316 to 3327 (SQETSRPESVTE). Composition is skewed to basic and acidic residues over residues 3350–3363 (NAKD…EQRP), 3373–3399 (SIKD…RESV), 3419–3431 (SVKD…KEES), 3448–3465 (VKDE…ESVA), 3484–3502 (SVKD…ESGA), 3521–3539 (SIKD…ESVA), 3558–3576 (SVKD…DSVA), 3599–3613 (EAEK…ESVA), 3632–3650 (SIKD…ESVA), 3669–3687 (SVKD…DSVA), 3710–3724 (EAEK…ESVA), 3743–3761 (SVKD…ESVA), 3780–3798 (SVKD…ESVA), and 3817–3835 (SVKD…ESVA). The span at 3836–3850 (EKSSLASKKASRPAS) shows a compositional bias: low complexity. Composition is skewed to basic and acidic residues over residues 3854-3872 (SVKD…ESVA), 3891-3909 (SVKD…ESVA), 3928-3946 (SVKD…ESGA), 3965-3983 (SVKD…ESVT), 4002-4020 (SVKD…ESVA), 4039-4066 (SIKD…ESIK), 4086-4095 (SVKDETEKPE), and 4115-4141 (AKDE…KEAS). 2 stretches are compositionally biased toward polar residues: residues 4142-4152 (RSLSVAETASS) and 4214-4223 (QPDTGHTAST). Basic and acidic residues-rich tracts occupy residues 4362-4379 (IIPD…KSTA), 4386-4410 (DKST…KSSP), and 4419-4432 (IEEK…EKAQ). The segment covering 4443 to 4461 (PESVASQPESVPSPSQSAA) has biased composition (low complexity). Basic and acidic residues predominate over residues 4462-4481 (SHEHKEVELSESHKAEKSSR). Positions 4498-4508 (RPASSTSQFST) are enriched in polar residues. The segment covering 4517–4528 (ESLLHSLTTTET) has biased composition (low complexity). The span at 4529–4539 (VETKQMEEKSS) shows a compositional bias: basic and acidic residues. Residues 4540–4560 (FESVSTSVTKSTVLSSQSTVQ) are compositionally biased toward low complexity. Composition is skewed to basic and acidic residues over residues 4575–4584 (KVEDSSRRES) and 4639–4650 (SNKEIKDARETK). Low complexity-rich tracts occupy residues 4651 to 4662 (VTSQFTTTTSSA) and 4703 to 4714 (TTASAVSSTSAS). A compositionally biased stretch (acidic residues) spans 4744-4754 (PEDEEPADDVD). 2 stretches are compositionally biased toward basic and acidic residues: residues 4755 to 4764 (ERSSVKESRS) and 4788 to 4798 (LVEEEHEHVEE). Low complexity predominate over residues 4804 to 4829 (TSTSKTTTLLQSSEQSSTTTSSTSKT). Residues 4835–4851 (ESITLTQMDQQTSQSQG) show a composition bias toward polar residues. The span at 4875 to 4905 (GSAGSVIGAGAGAVAAGGKCESSAASIVSSS) shows a compositional bias: low complexity. Residues 4915-4930 (GKSSPGALTSESQSIP) are compositionally biased toward polar residues. Ser-4950 is modified (phosphoserine; by GSK3-beta). Residues 4955-4970 (VSKDELKSLEMQHHSQ) are compositionally biased toward basic and acidic residues. Over residues 5101 to 5112 (SYELQHSSSGVS) the composition is skewed to polar residues. Residues 5185–5196 (SQSSESVESSSQ) show a composition bias toward low complexity.

In terms of assembly, heterodimer of a heavy and a light chain. Interacts with Fmr1. Found in a complex with tubulin and Futsch. Post-translationally, several minor light chains can be created with markedly different pIs. In terms of processing, phosphorylated by SGG/GSK3. Phosphorylated by LRRK2 at the presynapse of neuromuscular junctions, which negatively regulates the activity controlling synaptic differentiation. Neuronal cells within the PNS and CNS.

The protein localises to the cytoplasm. It is found in the cytoskeleton. During embryogenesis, necessary for dendritic and axonal organization and growth at the neuromuscular junction through the regulation of the synaptic microtubule cytoskeleton. Microtubule hairpin loops are found within a small subset of synaptic boutons at the neuromuscular synapse, these loops are stabilized by futsch. Loop morphology and dynamics suggest that rearrangement of these microtubule-based loops is a critical component of the process of bouton division and for subsequent nerve-terminal growth and branching. Translation is repressed by Fmr1. Together with ringer, required for neuromuscular junction (NMJ) bouton growth by regulating synaptic microtubules. Function with ringer in maintaining microtubule stability and dynamics, is essential for promoting axon regeneration in response to peripheral (PNS) and central nervous system (CNS) injury. In response to axotomy, acts downstream of a stress response cascade involving Xbp1 splicing, to control axon regeneration. The polypeptide is Microtubule-associated protein futsch (futsch) (Drosophila melanogaster (Fruit fly)).